The primary structure comprises 100 residues: Urease subunit gamma (100 aa).

This sequence belongs to the urease gamma subunit family. Heterotrimer of UreA (gamma), UreB (beta) and UreC (alpha) subunits. Three heterotrimers associate to form the active enzyme.

The protein resides in the cytoplasm. It carries out the reaction urea + 2 H2O + H(+) = hydrogencarbonate + 2 NH4(+). The protein operates within nitrogen metabolism; urea degradation; CO(2) and NH(3) from urea (urease route): step 1/1. This chain is Urease subunit gamma, found in Mycolicibacterium vanbaalenii (strain DSM 7251 / JCM 13017 / BCRC 16820 / KCTC 9966 / NRRL B-24157 / PYR-1) (Mycobacterium vanbaalenii).